Reading from the N-terminus, the 668-residue chain is 1-deoxy-D-xylulose-5-phosphate synthase (668 aa).

Thiamine diphosphate contacts are provided by residues His-105 and 146–148 (AHS). Position 177 (Asp-177) interacts with Mg(2+). Residues 178–179 (GA), Asn-206, Tyr-316, and Glu-398 contribute to the thiamine diphosphate site. Asn-206 is a Mg(2+) binding site.

Belongs to the transketolase family. DXPS subfamily. As to quaternary structure, homodimer. It depends on Mg(2+) as a cofactor. Requires thiamine diphosphate as cofactor.

It carries out the reaction D-glyceraldehyde 3-phosphate + pyruvate + H(+) = 1-deoxy-D-xylulose 5-phosphate + CO2. It functions in the pathway metabolic intermediate biosynthesis; 1-deoxy-D-xylulose 5-phosphate biosynthesis; 1-deoxy-D-xylulose 5-phosphate from D-glyceraldehyde 3-phosphate and pyruvate: step 1/1. Its function is as follows. Catalyzes the acyloin condensation reaction between C atoms 2 and 3 of pyruvate and glyceraldehyde 3-phosphate to yield 1-deoxy-D-xylulose-5-phosphate (DXP). The sequence is that of 1-deoxy-D-xylulose-5-phosphate synthase from Nitrobacter hamburgensis (strain DSM 10229 / NCIMB 13809 / X14).